The primary structure comprises 544 residues: Prolyl 4-hydroxylase subunit alpha-3 (544 aa).

A signal peptide spans 1 to 19; that stretch reads MGPGARLAALLAVLALGTG. The stretch at 107 to 131 forms a coiled coil; it reads LEASENIRALKDGYEKVEQDLPAFE. The TPR repeat unit spans residues 227-260; sequence EDALDHLAFAYFRAGNVSCALSLSREFLLYSPDN. Residue Asn-242 is glycosylated (N-linked (GlcNAc...) asparagine). Positions 422–529 constitute a Fe2OG dioxygenase domain; that stretch reads YAEYLQVVNY…KWVANKWIHE (108 aa). Fe cation-binding residues include His-440 and Asp-442. Residue Asn-482 is glycosylated (N-linked (GlcNAc...) asparagine). Position 510 (His-510) interacts with Fe cation. Lys-520 is a binding site for 2-oxoglutarate.

This sequence belongs to the P4HA family. In terms of assembly, heterotetramer of two alpha-3 chains and two beta chains (the beta chain is the multi-functional PDI). Fe(2+) serves as cofactor. L-ascorbate is required as a cofactor. In terms of processing, N-glycosylation plays no role in the catalytic activity. As to expression, highly expressed in placenta, liver and fetal skin. Weakly expressed in fetal epiphyseal cartilage, fetal liver, fibroblast, lung and skeletal muscle. Expressed also in fibrous cap of carotid atherosclerotic lesions.

It is found in the endoplasmic reticulum lumen. The enzyme catalyses L-prolyl-[collagen] + 2-oxoglutarate + O2 = trans-4-hydroxy-L-prolyl-[collagen] + succinate + CO2. In terms of biological role, catalyzes the post-translational formation of 4-hydroxyproline in -Xaa-Pro-Gly- sequences in collagens and other proteins. This is Prolyl 4-hydroxylase subunit alpha-3 (P4HA3) from Homo sapiens (Human).